A 258-amino-acid chain; its full sequence is MSFFLTTPTAIDLGVNIDHVATLRNVRGTTYPDPIRAALAAEEAGADAITLHLREDRRHIVDADVRKLRPLLKTRMNLECAVTTEMLDIACEVRPHDACLVPEKREELTTEGGLDVAGHFEAVRAACKQLADVGVRVSLFIDPDETQIRAAHEAGAPVIELHTGRYAEAHDEAEQQREYERIVAGVQAGAQLGLKVNAGHGLHYTNVQQIAAIDGIVELNIGHAIVAHAIFAGWDNAVREMKAIMVAARVAALHGGAR.

N16 serves as a coordination point for 3-amino-2-oxopropyl phosphate. 18–19 (DH) is a 1-deoxy-D-xylulose 5-phosphate binding site. A 3-amino-2-oxopropyl phosphate-binding site is contributed by R27. The active-site Proton acceptor is the H52. 1-deoxy-D-xylulose 5-phosphate contacts are provided by R54 and H59. E79 functions as the Proton acceptor in the catalytic mechanism. T109 is a 1-deoxy-D-xylulose 5-phosphate binding site. The active-site Proton donor is H200. 3-amino-2-oxopropyl phosphate contacts are provided by residues G201 and 222–223 (GH).

The protein belongs to the PNP synthase family. Homooctamer; tetramer of dimers.

It localises to the cytoplasm. It catalyses the reaction 3-amino-2-oxopropyl phosphate + 1-deoxy-D-xylulose 5-phosphate = pyridoxine 5'-phosphate + phosphate + 2 H2O + H(+). The protein operates within cofactor biosynthesis; pyridoxine 5'-phosphate biosynthesis; pyridoxine 5'-phosphate from D-erythrose 4-phosphate: step 5/5. In terms of biological role, catalyzes the complicated ring closure reaction between the two acyclic compounds 1-deoxy-D-xylulose-5-phosphate (DXP) and 3-amino-2-oxopropyl phosphate (1-amino-acetone-3-phosphate or AAP) to form pyridoxine 5'-phosphate (PNP) and inorganic phosphate. This Burkholderia lata (strain ATCC 17760 / DSM 23089 / LMG 22485 / NCIMB 9086 / R18194 / 383) protein is Pyridoxine 5'-phosphate synthase.